A 688-amino-acid chain; its full sequence is Complement C1s subcomponent (688 aa).

Positions 1 to 15 (MWCFVFFSLLASFSA) are cleaved as a signal peptide. The CUB 1 domain maps to 16-130 (EPTMYGEILS…TGFAAYYSAV (115 aa)). Residues glutamate 60, aspartate 68, aspartate 113, aspartate 131, valine 132, and glutamate 134 each coordinate Ca(2+). A disulfide bridge connects residues cysteine 65 and cysteine 83. The EGF-like; calcium-binding domain maps to 131–172 (DVNECTDFTDVPCSHFCNNFIGGYFCSCPPEYFLHDDMRTCG). Disulfide bonds link cysteine 135–cysteine 147, cysteine 143–cysteine 156, and cysteine 158–cysteine 171. The Ca(2+) site is built by asparagine 149, phenylalanine 150, and glycine 153. Position 149 is a (3R)-3-hydroxyasparagine (asparagine 149). Residue asparagine 174 is glycosylated (N-linked (GlcNAc...) asparagine). A disulfide bond links cysteine 175 and cysteine 202. A CUB 2 domain is found at 175-290 (CSGDVFTALI…KGWKLRYHGD (116 aa)). Ca(2+)-binding residues include glutamate 226, aspartate 236, aspartate 275, glycine 278, and glutamine 279. A disulfide bridge links cysteine 234 with cysteine 251. Sushi domains lie at 292–356 (IPCP…ECQP) and 357–423 (VDCG…KCIP). 7 disulfide bridges follow: cysteine 294–cysteine 341, cysteine 321–cysteine 354, cysteine 359–cysteine 403, cysteine 386–cysteine 421, cysteine 425–cysteine 549, cysteine 595–cysteine 618, and cysteine 627–cysteine 659. Asparagine 406 is a glycosylation site (N-linked (GlcNAc...) asparagine). The 243-residue stretch at 438–680 (IFGGYSTKIQ…YVDWILKTMQ (243 aa)) folds into the Peptidase S1 domain. Active-site charge relay system residues include histidine 475 and aspartate 529. Serine 631 serves as the catalytic Charge relay system.

This sequence belongs to the peptidase S1 family. In terms of assembly, core component of the complement C1 complex, a calcium-dependent complex composed of 1 molecule of the C1Q subcomplex, 2 molecules of C1R and 2 molecules of C1S. The C1Q subcomplex is composed 18 subunits: 3 chains of C1QA, C1QB, and C1QC trimerize to form 6 collagen-like triple helices connected to six globular ligand-recognition modules. In terms of processing, cleaved and activated by C1R to generate Complement C1s subcomponent heavy and light chains. The iron and 2-oxoglutarate dependent 3-hydroxylation of aspartate and asparagine is (R) stereospecific within EGF domains.

Its subcellular location is the secreted. The protein localises to the cell surface. It carries out the reaction Cleavage of Arg-|-Ala bond in complement component C4 to form C4a and C4b, and Lys(or Arg)-|-Lys bond in complement component C2 to form C2a and C2b: the 'classical' pathway C3 convertase.. Cleaved and activated by C1R. Immunoglobulin-binding promotes autoactivation of C1R, which results in the cleavage of the Arg-Ile bond in the catalytic domain. Inhibited by C1 inhibitor (SERPING1). Component of the complement C1 complex, a multiprotein complex that initiates the classical pathway of the complement system, a cascade of proteins that leads to phagocytosis and breakdown of pathogens and signaling that strengthens the adaptive immune system. C1S is activated following association of the C1 complex with immunoglobulins (IgG or IgM) complexed with antigens to form antigen-antibody complexes on the surface of pathogens. C1S is cleaved and activated by C1R to generate C1s subcomponent heavy and light chains. C1s subcomponent light chain then cleaves and activates C2 and C4, the next components of the classical complement pathway. Functionally, serine protease component of the complement C1 complex, which catalyzes cleavage and activation of C2 and C4, the next components of the classical complement pathway. Also cleaves IGFBP5 and thereby inhibits the trophic effects of IGF1. The sequence is that of Complement C1s subcomponent from Rattus norvegicus (Rat).